Reading from the N-terminus, the 196-residue chain is ATP-dependent Clp protease proteolytic subunit (196 aa).

The active-site Nucleophile is the serine 96. The active site involves histidine 121.

This sequence belongs to the peptidase S14 family. Fourteen ClpP subunits assemble into 2 heptameric rings which stack back to back to give a disk-like structure with a central cavity, resembling the structure of eukaryotic proteasomes.

The protein localises to the cytoplasm. It catalyses the reaction Hydrolysis of proteins to small peptides in the presence of ATP and magnesium. alpha-casein is the usual test substrate. In the absence of ATP, only oligopeptides shorter than five residues are hydrolyzed (such as succinyl-Leu-Tyr-|-NHMec, and Leu-Tyr-Leu-|-Tyr-Trp, in which cleavage of the -Tyr-|-Leu- and -Tyr-|-Trp bonds also occurs).. In terms of biological role, cleaves peptides in various proteins in a process that requires ATP hydrolysis. Has a chymotrypsin-like activity. Plays a major role in the degradation of misfolded proteins. This chain is ATP-dependent Clp protease proteolytic subunit, found in Streptococcus thermophilus (strain CNRZ 1066).